The following is a 330-amino-acid chain: Autoinducer 2 import system permease protein LsrD (330 aa).

Over 1 to 4 (MRIR) the chain is Cytoplasmic. Residues 5–25 (YGWELALAALLVIEIVSFGAI) form a helical membrane-spanning segment. The Periplasmic portion of the chain corresponds to 26–42 (NPRMLDLNMLLFSTSDF). A helical transmembrane segment spans residues 43–63 (ICIGIVALPLTMVIVSGGIDI). Topologically, residues 64-67 (SFGS) are cytoplasmic. The next 2 membrane-spanning stretches (helical) occupy residues 68–88 (TIGL…PMPL) and 89–109 (AILL…GLII). The Cytoplasmic segment spans residues 110–115 (YTKVNP). Residues 116 to 136 (LVITLGTLYLFAGSALLLSGM) traverse the membrane as a helical segment. The Periplasmic portion of the chain corresponds to 137–159 (AGATGYEGIGGFPMAFTDFANLD). Residues 160–180 (VLGLPVPLIIFLICLLVFWLW) form a helical membrane-spanning segment. Residues 181-209 (LHKTHAGRNVFLIGQSPRVALYSAIPVNR) lie on the Cytoplasmic side of the membrane. Residues 210-230 (TLCALYAMTGLASAVAAVLLV) form a helical membrane-spanning segment. The Periplasmic portion of the chain corresponds to 231 to 237 (SYFGSAR). Transmembrane regions (helical) follow at residues 238-258 (SDLG…GGAN) and 259-279 (IYGG…VGYL). Over 280–285 (QQGLQM) the chain is Periplasmic. Residues 286-306 (AGVPNQVSSALSGALLIVVVV) form a helical membrane-spanning segment. The Cytoplasmic segment spans residues 307–330 (GRSVSLHRQQIKEWLARRANNPLP).

The protein belongs to the binding-protein-dependent transport system permease family. AraH/RbsC subfamily. In terms of assembly, the complex is composed of two ATP-binding proteins (LsrA), two transmembrane proteins (LsrC and LsrD) and a solute-binding protein (LsrB).

It localises to the cell inner membrane. Part of the ABC transporter complex LsrABCD involved in autoinducer 2 (AI-2) import. Probably responsible for the translocation of the substrate across the membrane. This Escherichia coli O157:H7 protein is Autoinducer 2 import system permease protein LsrD (lsrD).